We begin with the raw amino-acid sequence, 141 residues long: Small ribosomal subunit protein uS8 (141 aa).

This sequence belongs to the universal ribosomal protein uS8 family. As to quaternary structure, part of the 30S ribosomal subunit. Contacts proteins S5 and S12.

Its function is as follows. One of the primary rRNA binding proteins, it binds directly to 16S rRNA central domain where it helps coordinate assembly of the platform of the 30S subunit. The polypeptide is Small ribosomal subunit protein uS8 (Mycoplasma genitalium (strain ATCC 33530 / DSM 19775 / NCTC 10195 / G37) (Mycoplasmoides genitalium)).